The sequence spans 182 residues: tRNA-splicing endonuclease (182 aa).

Catalysis depends on residues Y119, H127, and K158.

It belongs to the tRNA-intron endonuclease family. Archaeal short subfamily. In terms of assembly, homotetramer; although the tetramer contains four active sites, only two participate in the cleavage. Therefore, it should be considered as a dimer of dimers.

The catalysed reaction is pretRNA = a 3'-half-tRNA molecule with a 5'-OH end + a 5'-half-tRNA molecule with a 2',3'-cyclic phosphate end + an intron with a 2',3'-cyclic phosphate and a 5'-hydroxyl terminus.. Functionally, endonuclease that removes tRNA introns. Cleaves pre-tRNA at the 5'- and 3'-splice sites to release the intron. The products are an intron and two tRNA half-molecules bearing 2',3' cyclic phosphate and 5'-OH termini. Recognizes a pseudosymmetric substrate in which 2 bulged loops of 3 bases are separated by a stem of 4 bp. This chain is tRNA-splicing endonuclease, found in Saccharolobus solfataricus (strain ATCC 35092 / DSM 1617 / JCM 11322 / P2) (Sulfolobus solfataricus).